Here is a 180-residue protein sequence, read N- to C-terminus: Oligoribonuclease (180 aa).

An Exonuclease domain is found at 7 to 170 (LIWIDLEMTG…DDIRESIAEL (164 aa)). Residue Tyr128 is part of the active site.

It belongs to the oligoribonuclease family.

The protein resides in the cytoplasm. 3'-to-5' exoribonuclease specific for small oligoribonucleotides. The protein is Oligoribonuclease of Pseudomonas entomophila (strain L48).